The chain runs to 511 residues: ATP synthase subunit alpha (511 aa).

Residue 170-177 (GDRQTGKT) coordinates ATP.

Belongs to the ATPase alpha/beta chains family. In terms of assembly, F-type ATPases have 2 components, CF(1) - the catalytic core - and CF(0) - the membrane proton channel. CF(1) has five subunits: alpha(3), beta(3), gamma(1), delta(1), epsilon(1). CF(0) has three main subunits: a(1), b(2) and c(9-12). The alpha and beta chains form an alternating ring which encloses part of the gamma chain. CF(1) is attached to CF(0) by a central stalk formed by the gamma and epsilon chains, while a peripheral stalk is formed by the delta and b chains.

The protein resides in the cell inner membrane. The catalysed reaction is ATP + H2O + 4 H(+)(in) = ADP + phosphate + 5 H(+)(out). Functionally, produces ATP from ADP in the presence of a proton gradient across the membrane. The alpha chain is a regulatory subunit. The polypeptide is ATP synthase subunit alpha (Granulibacter bethesdensis (strain ATCC BAA-1260 / CGDNIH1)).